An 853-amino-acid polypeptide reads, in one-letter code: DNA topoisomerase 1 (853 aa).

One can recognise a Toprim domain in the interval 3 to 136; that stretch reads KSLVIVESPV…KFRRVVFNEI (134 aa). 2 residues coordinate Mg(2+): E9 and D105. The Topo IA-type catalytic domain maps to 152–565; that stretch reads NMNRVYSQQA…SFFDNFSQQL (414 aa). Residues 186–191 form an interaction with DNA region; the sequence is SAGRVQ. Catalysis depends on Y313, which acts as the O-(5'-phospho-DNA)-tyrosine intermediate. 3 C4-type zinc fingers span residues 589 to 621, 649 to 676, and 699 to 724; these read CSLC…EKRC, CKKC…NPSC, and CEKC…NDTC.

This sequence belongs to the type IA topoisomerase family. As to quaternary structure, monomer. The cofactor is Mg(2+).

It catalyses the reaction ATP-independent breakage of single-stranded DNA, followed by passage and rejoining.. Functionally, releases the supercoiling and torsional tension of DNA, which is introduced during the DNA replication and transcription, by transiently cleaving and rejoining one strand of the DNA duplex. Introduces a single-strand break via transesterification at a target site in duplex DNA. The scissile phosphodiester is attacked by the catalytic tyrosine of the enzyme, resulting in the formation of a DNA-(5'-phosphotyrosyl)-enzyme intermediate and the expulsion of a 3'-OH DNA strand. The free DNA strand then undergoes passage around the unbroken strand, thus removing DNA supercoils. Finally, in the religation step, the DNA 3'-OH attacks the covalent intermediate to expel the active-site tyrosine and restore the DNA phosphodiester backbone. This chain is DNA topoisomerase 1, found in Buchnera aphidicola subsp. Schizaphis graminum (strain Sg).